Consider the following 361-residue polypeptide: Histidinol-phosphate aminotransferase (361 aa).

Position 223 is an N6-(pyridoxal phosphate)lysine (Lys-223).

This sequence belongs to the class-II pyridoxal-phosphate-dependent aminotransferase family. Histidinol-phosphate aminotransferase subfamily. As to quaternary structure, homodimer. The cofactor is pyridoxal 5'-phosphate.

The catalysed reaction is L-histidinol phosphate + 2-oxoglutarate = 3-(imidazol-4-yl)-2-oxopropyl phosphate + L-glutamate. It participates in amino-acid biosynthesis; L-histidine biosynthesis; L-histidine from 5-phospho-alpha-D-ribose 1-diphosphate: step 7/9. This chain is Histidinol-phosphate aminotransferase, found in Deinococcus radiodurans (strain ATCC 13939 / DSM 20539 / JCM 16871 / CCUG 27074 / LMG 4051 / NBRC 15346 / NCIMB 9279 / VKM B-1422 / R1).